Here is a 119-residue protein sequence, read N- to C-terminus: Large ribosomal subunit protein bL20 (119 aa).

This sequence belongs to the bacterial ribosomal protein bL20 family.

Its function is as follows. Binds directly to 23S ribosomal RNA and is necessary for the in vitro assembly process of the 50S ribosomal subunit. It is not involved in the protein synthesizing functions of that subunit. The polypeptide is Large ribosomal subunit protein bL20 (Streptococcus pneumoniae serotype 2 (strain D39 / NCTC 7466)).